Here is a 316-residue protein sequence, read N- to C-terminus: 4-diphosphocytidyl-2-C-methyl-D-erythritol kinase (316 aa).

Lysine 11 is a catalytic residue. 99–109 (PVAAGLAGGST) contacts ATP. Aspartate 141 is an active-site residue.

Belongs to the GHMP kinase family. IspE subfamily.

The enzyme catalyses 4-CDP-2-C-methyl-D-erythritol + ATP = 4-CDP-2-C-methyl-D-erythritol 2-phosphate + ADP + H(+). It functions in the pathway isoprenoid biosynthesis; isopentenyl diphosphate biosynthesis via DXP pathway; isopentenyl diphosphate from 1-deoxy-D-xylulose 5-phosphate: step 3/6. In terms of biological role, catalyzes the phosphorylation of the position 2 hydroxy group of 4-diphosphocytidyl-2C-methyl-D-erythritol. The protein is 4-diphosphocytidyl-2-C-methyl-D-erythritol kinase of Gloeothece citriformis (strain PCC 7424) (Cyanothece sp. (strain PCC 7424)).